The following is a 314-amino-acid chain: Acetaldehyde dehydrogenase 1 (314 aa).

11–14 (SGNI) contributes to the NAD(+) binding site. C129 acts as the Acyl-thioester intermediate in catalysis. NAD(+)-binding positions include 160 to 168 (SAGPGTRAN) and N292.

It belongs to the acetaldehyde dehydrogenase family.

It carries out the reaction acetaldehyde + NAD(+) + CoA = acetyl-CoA + NADH + H(+). This is Acetaldehyde dehydrogenase 1 from Nocardioides sp. (strain ATCC BAA-499 / JS614).